The primary structure comprises 83 residues: Neurotoxin-1'' (83 aa).

An N-terminal signal peptide occupies residues 1–19 (MNYLVMISLALLLMIGVES). Positions 21–82 (RDGYIVYPNN…PIKDTSRKCT (62 aa)) constitute an LCN-type CS-alpha/beta domain. 4 disulfide bridges follow: C31-C81, C35-C53, C39-C63, and C43-C65. A propeptide (removed by a carboxypeptidase (in neurotoxin-1/1')) is located at residue R83.

The protein belongs to the long (4 C-C) scorpion toxin superfamily. Sodium channel inhibitor family. Alpha subfamily. Expressed by the venom gland.

It is found in the secreted. Alpha toxins bind voltage-independently at site-3 of sodium channels (Nav) and inhibit the inactivation of the activated channels, thereby blocking neuronal transmission. Is active against mammals and binds with high affinity rat brain synaptosomes. This chain is Neurotoxin-1'', found in Androctonus australis (Sahara scorpion).